The chain runs to 84 residues: Beta-cardiotoxin CTX14 (84 aa).

The first 21 residues, 1–21 (MKTLLLTLVVVTIVCLDLGYT), serve as a signal peptide directing secretion. 4 disulfides stabilise this stretch: cysteine 24/cysteine 43, cysteine 36/cysteine 61, cysteine 65/cysteine 76, and cysteine 77/cysteine 82.

The protein belongs to the three-finger toxin family. Short-chain subfamily. Aminergic toxin sub-subfamily. Expressed by the venom gland.

The protein resides in the secreted. Functionally, acts as a beta-blocker by binding to beta-1 and beta-2 adrenergic receptors (ADRB1 and ADRB2). It dose-dependently decreases the heart rate (bradycardia), whereas conventional cardiotoxins increases it. At 100 mg/kg, intraperitoneal injection into mice provokes labored breathing, impaired locomotion, lack of response to external stimuli, and death (after 30 minutes). This chain is Beta-cardiotoxin CTX14, found in Ophiophagus hannah (King cobra).